The chain runs to 429 residues: Inner membrane transport protein RhmT (429 aa).

Residues 1-16 (MSTALLDAVVKKNRVR) lie on the Cytoplasmic side of the membrane. Residues 17 to 37 (LIPFMLALYVLAFLDRSNIGF) traverse the membrane as a helical segment. Over 38–54 (AKQTYQIDTGLSNEAYA) the chain is Periplasmic. Residues 55 to 75 (LGAGIFFVVYAFLGVPANLLM) form a helical membrane-spanning segment. Residues 76–81 (RKLGAR) are Cytoplasmic-facing. A helical transmembrane segment spans residues 82 to 102 (TWIGTTTLLWGFLSAAMAWAD). Topologically, residues 103–143 (TEAKFLIVRTLLRAAEAGFFPGMIYLTSQWFPQRNRASIMG) are periplasmic. The helical transmembrane segment at 144–164 (LFYMGAPLALTLGSPLSGALL) threads the bilayer. Residues 165–174 (EMHGFMGHPG) are Cytoplasmic-facing. The chain crosses the membrane as a helical span at residues 175 to 195 (WFWMFVIEGLLAVGAGVFTFF). Residues 196-242 (WLDDTPEQARFLSKQEKTLLINQLASEEQQKVTSRLSDALRNGRVWQ) are Periplasmic-facing. A helical membrane pass occupies residues 243–263 (LAIIYLTIQVAVYGLIFFLPT). Topologically, residues 264–274 (QVAALLGTKVG) are cytoplasmic. A helical membrane pass occupies residues 275 to 295 (FTASVVTAIPWVAALFGTWLI). At 296-324 (PRYSDKTGERRNVAALTLLAAGIGIGLSG) the chain is on the periplasmic side. A helical membrane pass occupies residues 325-345 (LLSPVMAIVALCVAAIGFIAV). The Cytoplasmic segment spans residues 346-361 (QPVFWTMPTQLLSGTA). The helical transmembrane segment at 362 to 382 (LAAGIGFVNLFGAVGGFIAPI) threads the bilayer. The Periplasmic portion of the chain corresponds to 383-394 (LRVKAETLFASD). Residues 395 to 415 (AAGLLTLAAVAVIGSLIIFTL) form a helical membrane-spanning segment. At 416–429 (RVNRTVAQTDVAHH) the chain is on the cytoplasmic side.

It belongs to the major facilitator superfamily. Phthalate permease family.

Its subcellular location is the cell inner membrane. This is Inner membrane transport protein RhmT (rhmT) from Escherichia coli (strain K12).